A 444-amino-acid chain; its full sequence is Serine/threonine-protein kinase 2 (444 aa).

The region spanning 87-444 (NRDFYHLSTG…WIDGKSTSHQ (358 aa)) is the Protein kinase domain. ATP contacts are provided by residues 93-101 (LSTGGYGII) and K118. The active-site Proton acceptor is the D307.

The protein belongs to the protein kinase superfamily. Ser/Thr protein kinase family. Poxviruses subfamily. Post-translationally, phosphorylated in vivo. Autophosphorylated in vitro.

The protein resides in the host endoplasmic reticulum. It is found in the host endoplasmic reticulum-Golgi intermediate compartment. The catalysed reaction is L-seryl-[protein] + ATP = O-phospho-L-seryl-[protein] + ADP + H(+). It catalyses the reaction L-threonyl-[protein] + ATP = O-phospho-L-threonyl-[protein] + ADP + H(+). Its function is as follows. Essential serine-protein kinase involved in the early stage of virion morphogenesis. The protein is Serine/threonine-protein kinase 2 (OPG054) of Vertebrata (FPV).